Consider the following 426-residue polypeptide: Glutamate-1-semialdehyde 2,1-aminomutase (426 aa).

Residue lysine 265 is modified to N6-(pyridoxal phosphate)lysine.

It belongs to the class-III pyridoxal-phosphate-dependent aminotransferase family. HemL subfamily. In terms of assembly, homodimer. Pyridoxal 5'-phosphate is required as a cofactor.

The protein localises to the cytoplasm. The enzyme catalyses (S)-4-amino-5-oxopentanoate = 5-aminolevulinate. Its pathway is porphyrin-containing compound metabolism; protoporphyrin-IX biosynthesis; 5-aminolevulinate from L-glutamyl-tRNA(Glu): step 2/2. This is Glutamate-1-semialdehyde 2,1-aminomutase from Marinobacter nauticus (strain ATCC 700491 / DSM 11845 / VT8) (Marinobacter aquaeolei).